Here is a 601-residue protein sequence, read N- to C-terminus: Protein NRT1/ PTR FAMILY 4.4 (601 aa).

The next 2 membrane-spanning stretches (helical) occupy residues Ala-44 to Asn-64 and Ala-82 to Leu-102. Thr-112 is modified (phosphothreonine). 10 helical membrane-spanning segments follow: residues Met-113–Leu-133, Thr-160–Ile-180, Phe-198–Val-218, Val-228–Thr-248, Ile-337–Gln-357, Ala-386–Leu-406, Leu-420–Val-440, Val-453–Phe-473, Phe-493–Val-513, and His-544–Ser-564.

Belongs to the major facilitator superfamily. Proton-dependent oligopeptide transporter (POT/PTR) (TC 2.A.17) family. In terms of tissue distribution, expressed in shoots, roots and stems.

It is found in the membrane. This chain is Protein NRT1/ PTR FAMILY 4.4 (NPF4.4), found in Arabidopsis thaliana (Mouse-ear cress).